Consider the following 357-residue polypeptide: Transactivator protein DR7 (357 aa).

An interaction with host p53 region spans residues 107–187 (LVGKDGAVYV…LLTVGGLCQT (81 aa)).

The protein belongs to the herpesviridae US22 family. As to quaternary structure, interacts with host p53 and inhibits p53-activated transcription.

In terms of biological role, involved in transactivation. Displays transforming activity. This is Transactivator protein DR7 (DR7L) from Homo sapiens (Human).